The following is a 212-amino-acid chain: Leucyl/phenylalanyl-tRNA--protein transferase (212 aa).

It belongs to the L/F-transferase family.

The protein localises to the cytoplasm. It carries out the reaction N-terminal L-lysyl-[protein] + L-leucyl-tRNA(Leu) = N-terminal L-leucyl-L-lysyl-[protein] + tRNA(Leu) + H(+). The catalysed reaction is N-terminal L-arginyl-[protein] + L-leucyl-tRNA(Leu) = N-terminal L-leucyl-L-arginyl-[protein] + tRNA(Leu) + H(+). It catalyses the reaction L-phenylalanyl-tRNA(Phe) + an N-terminal L-alpha-aminoacyl-[protein] = an N-terminal L-phenylalanyl-L-alpha-aminoacyl-[protein] + tRNA(Phe). Functionally, functions in the N-end rule pathway of protein degradation where it conjugates Leu, Phe and, less efficiently, Met from aminoacyl-tRNAs to the N-termini of proteins containing an N-terminal arginine or lysine. The protein is Leucyl/phenylalanyl-tRNA--protein transferase of Christiangramia forsetii (strain DSM 17595 / CGMCC 1.15422 / KT0803) (Gramella forsetii).